The sequence spans 98 residues: NADH-ubiquinone oxidoreductase chain 4L (98 aa).

3 helical membrane passes run 1–21 (MSIV…GMLI), 29–49 (SLLC…LIIL), and 61–81 (IILL…LVMV).

Belongs to the complex I subunit 4L family. In terms of assembly, core subunit of respiratory chain NADH dehydrogenase (Complex I) which is composed of 45 different subunits.

It localises to the mitochondrion inner membrane. The enzyme catalyses a ubiquinone + NADH + 5 H(+)(in) = a ubiquinol + NAD(+) + 4 H(+)(out). In terms of biological role, core subunit of the mitochondrial membrane respiratory chain NADH dehydrogenase (Complex I) which catalyzes electron transfer from NADH through the respiratory chain, using ubiquinone as an electron acceptor. Part of the enzyme membrane arm which is embedded in the lipid bilayer and involved in proton translocation. This chain is NADH-ubiquinone oxidoreductase chain 4L (MT-ND4L), found in Herpestes javanicus (Small Indian mongoose).